A 149-amino-acid polypeptide reads, in one-letter code: Large-conductance mechanosensitive channel (149 aa).

Helical transmembrane passes span 10–30 (FALK…GAFA), 41–61 (IMPI…MFLI), and 87–107 (GSFI…FMMV).

This sequence belongs to the MscL family. In terms of assembly, homopentamer.

The protein localises to the cell inner membrane. Channel that opens in response to stretch forces in the membrane lipid bilayer. May participate in the regulation of osmotic pressure changes within the cell. This Psychrobacter cryohalolentis (strain ATCC BAA-1226 / DSM 17306 / VKM B-2378 / K5) protein is Large-conductance mechanosensitive channel.